The primary structure comprises 424 residues: Probable methyltransferase EP424R (424 aa).

The Adrift-type SAM-dependent 2'-O-MTase domain occupies 103–315; sequence QIVTNAWLKM…TYIVGKNRLR (213 aa). Residues Gly-135 and Asp-228 each contribute to the S-adenosyl-L-methionine site. Catalysis depends on Lys-268, which acts as the Proton acceptor.

The protein resides in the virion. In Ornithodoros (relapsing fever ticks), this protein is Probable methyltransferase EP424R.